Consider the following 457-residue polypeptide: Dihydrolipoyl dehydrogenase (457 aa).

FAD contacts are provided by residues 32 to 40 (EKQYFGGVC), Lys49, and Ala113. Cysteines 40 and 45 form a disulfide. NAD(+)-binding positions include 178-182 (GGGVI), Val235, and 262-265 (SIGR). The FAD site is built by Asp303 and Ala311. Catalysis depends on His437, which acts as the Proton acceptor.

It belongs to the class-I pyridine nucleotide-disulfide oxidoreductase family. In terms of assembly, homodimer. The cofactor is FAD.

It is found in the cytoplasm. It catalyses the reaction N(6)-[(R)-dihydrolipoyl]-L-lysyl-[protein] + NAD(+) = N(6)-[(R)-lipoyl]-L-lysyl-[protein] + NADH + H(+). Functionally, lipoamide dehydrogenase is a component of the alpha-ketoacid dehydrogenase complexes. In Mycoplasma genitalium (strain ATCC 33530 / DSM 19775 / NCTC 10195 / G37) (Mycoplasmoides genitalium), this protein is Dihydrolipoyl dehydrogenase (pdhD).